Reading from the N-terminus, the 259-residue chain is Global transcriptional regulator CodY (259 aa).

The GAF domain stretch occupies residues Met1–Leu155. The segment at residues Ala203–Arg222 is a DNA-binding region (H-T-H motif). A Phosphoserine modification is found at Ser215.

Belongs to the CodY family.

The protein localises to the cytoplasm. Functionally, DNA-binding global transcriptional regulator which is involved in the adaptive response to starvation and acts by directly or indirectly controlling the expression of numerous genes in response to nutrient availability. During rapid exponential growth, CodY is highly active and represses genes whose products allow adaptation to nutrient depletion. The protein is Global transcriptional regulator CodY of Bacillus anthracis (strain A0248).